Consider the following 509-residue polypeptide: Zinc finger protein Aiolos (509 aa).

Positions 1 to 19 (MEDIQTNAELKSTQEQSVP) are enriched in polar residues. Residues 1-86 (MEDIQTNAEL…MGNAEEPEIP (86 aa)) form a disordered region. A phosphoserine mark is found at Ser-22 and Ser-42. Positions 56-72 (DSMKVKDEYSERDENVL) are enriched in basic and acidic residues. Residues Lys-61, Lys-73, and Lys-100 each participate in a glycyl lysine isopeptide (Lys-Gly) (interchain with G-Cter in SUMO2) cross-link. C2H2-type zinc fingers lie at residues 118–140 (MNCD…KRSH), 146–168 (FQCN…IKLH), and 174–196 (FKCH…LRTH). The segment at 202 to 224 (YKCEFCGRSYKQRSSLEEHKERC) adopts a C2H2-type 4; atypical zinc-finger fold. Residue Lys-245 forms a Glycyl lysine isopeptide (Lys-Gly) (interchain with G-Cter in SUMO2) linkage. Thr-326 is subject to Phosphothreonine. A disordered region spans residues 364 to 394 (IHLPEKSVPSERGLSPNNSGHDSTDTDSNHE). Phosphoserine is present on Ser-378. Residues 385–394 (DSTDTDSNHE) show a composition bias toward basic and acidic residues. Residues 452-474 (YRCDHCRVLFLDYVMFTIHMGCH) form a C2H2-type 5 zinc finger. Positions 452–504 (YRCDHCRVLFLDYVMFTIHMGCHGFRDPFECNMCGYRSHDRYEFSSHIARGEH) are mediates homodimerization and heterodimerization. Residues 480-504 (FECNMCGYRSHDRYEFSSHIARGEH) form a C2H2-type 6; atypical zinc finger.

It belongs to the Ikaros C2H2-type zinc-finger protein family. As to quaternary structure, homodimer. Heterodimer with other IKAROS family members. Interacts with IKZF4 and IKZF5. Interacts with IKZF1. Interacts with HRAS. Interacts with FOXP3; this interaction may be required for silencing target genes and regulating the suppressive activity of FOXP3-positive regulatory T-cells (Treg). Interacts with BCL21L isoform Bcl-X(L); this interaction blocks the anti-apoptotic role of BCL21L. Associates with histone deacetylase complexes containing HDAC1, MTA2 and SIN3A. In terms of processing, phosphorylation on tyrosine residues induced by IL2 is required for dissociation from HRAS and nuclear translocation of IKZF3 in T-cells. Phosphorylation on tyrosine residues induced by IL4 is required for dissociation from Bcl-X(L) in T-cells. In terms of tissue distribution, expressed most strongly in peripheral blood leukocytes, the spleen, and the thymus.

It is found in the nucleus. Its subcellular location is the cytoplasm. In terms of biological role, transcription factor that plays an important role in the regulation of lymphocyte differentiation. Plays an essential role in regulation of B-cell differentiation, proliferation and maturation to an effector state. Involved in regulating BCL2 expression and controlling apoptosis in T-cells in an IL2-dependent manner. This Homo sapiens (Human) protein is Zinc finger protein Aiolos (IKZF3).